Here is a 198-residue protein sequence, read N- to C-terminus: Transcription factor elt-7 (198 aa).

A compositionally biased stretch (polar residues) spans 1-18 (MLPETTTLQPLPSVTTIM). Positions 1–20 (MLPETTTLQPLPSVTTIMNE) are disordered. The GATA-type zinc-finger motif lies at 143–167 (CSHCSTTTTTLWRKNDEGNLECNAC).

The protein resides in the nucleus. In terms of biological role, transcriptional activator that binds to the consensus sequence 5'-[AT]GATA[AG]-3'. Required for gut-specific differentiation, specifically acting with the GATA region-binding transcription factor elt-2 to control normal gene expression and promote normal formation of the intestine. May have a protective role in response to infection by Gram-negative bacteria such as P.aeruginosa. This chain is Transcription factor elt-7, found in Caenorhabditis elegans.